The chain runs to 80 residues: MSCCGGKCGCGAGCKCGSGCNGCGNYADITEQSSASETLVMGVVGTQKLNYGQAEAGVATEGSCSGCKCVYCTCDPCTCK.

Belongs to the metallothionein superfamily. Type 15 family.

Functionally, metallothioneins have a high content of cysteine residues that bind various heavy metals. This chain is Metallothionein-like protein type 2 MET1 (MET1), found in Fragaria ananassa (Strawberry).